The sequence spans 326 residues: Beta-ketoacyl-[acyl-carrier-protein] synthase III (326 aa).

Catalysis depends on residues C120 and H253. The segment at 254 to 258 is ACP-binding; the sequence is QANIR. N283 is a catalytic residue.

This sequence belongs to the thiolase-like superfamily. FabH family. As to quaternary structure, homodimer.

Its subcellular location is the cytoplasm. The enzyme catalyses malonyl-[ACP] + acetyl-CoA + H(+) = 3-oxobutanoyl-[ACP] + CO2 + CoA. Its pathway is lipid metabolism; fatty acid biosynthesis. Catalyzes the condensation reaction of fatty acid synthesis by the addition to an acyl acceptor of two carbons from malonyl-ACP. Catalyzes the first condensation reaction which initiates fatty acid synthesis and may therefore play a role in governing the total rate of fatty acid production. Possesses both acetoacetyl-ACP synthase and acetyl transacylase activities. Its substrate specificity determines the biosynthesis of branched-chain and/or straight-chain of fatty acids. This chain is Beta-ketoacyl-[acyl-carrier-protein] synthase III, found in Cupriavidus taiwanensis (strain DSM 17343 / BCRC 17206 / CCUG 44338 / CIP 107171 / LMG 19424 / R1) (Ralstonia taiwanensis (strain LMG 19424)).